A 72-amino-acid polypeptide reads, in one-letter code: MAKTDLLEVQGTILEVLPNTMFKVQLKNGATILAHVSGKIRMNYIRILPGDTVVVEMSPYDLERGRIVFRHK.

An S1-like domain is found at 1 to 72 (MAKTDLLEVQ…ERGRIVFRHK (72 aa)).

The protein belongs to the IF-1 family. Component of the 30S ribosomal translation pre-initiation complex which assembles on the 30S ribosome in the order IF-2 and IF-3, IF-1 and N-formylmethionyl-tRNA(fMet); mRNA recruitment can occur at any time during PIC assembly.

Its subcellular location is the cytoplasm. One of the essential components for the initiation of protein synthesis. Stabilizes the binding of IF-2 and IF-3 on the 30S subunit to which N-formylmethionyl-tRNA(fMet) subsequently binds. Helps modulate mRNA selection, yielding the 30S pre-initiation complex (PIC). Upon addition of the 50S ribosomal subunit IF-1, IF-2 and IF-3 are released leaving the mature 70S translation initiation complex. The chain is Translation initiation factor IF-1 from Spiroplasma kunkelii.